A 914-amino-acid polypeptide reads, in one-letter code: Exoglucanase-2 (914 aa).

Positions 1-33 (MKRRLMKGISLLTLVFLIGIMLQLSLKSELTAY) are cleaved as a signal peptide. A CBM3 domain is found at 763 to 914 (VEGVLIIQSF…SGNLVYGIEP (152 aa)).

The protein belongs to the glycosyl hydrolase 48 (cellulase L) family.

The enzyme catalyses Hydrolysis of (1-&gt;4)-beta-D-glucosidic linkages in cellulose and cellotetraose, releasing cellobiose from the non-reducing ends of the chains.. The protein is Exoglucanase-2 (celY) of Thermoclostridium stercorarium (strain ATCC 35414 / DSM 8532 / NCIMB 11754) (Clostridium stercorarium).